Consider the following 66-residue polypeptide: MAKGKDVRVIIILECTGCARNGLNKESRGISRYITQKNRHNTPSRLELKKFCSYCYKHTIHAEIKK.

The protein belongs to the bacterial ribosomal protein bL33 family.

Its subcellular location is the plastid. The protein resides in the chloroplast. This Calycanthus floridus var. glaucus (Eastern sweetshrub) protein is Large ribosomal subunit protein bL33c.